Consider the following 290-residue polypeptide: ATP synthase gamma chain (290 aa).

The protein belongs to the ATPase gamma chain family. F-type ATPases have 2 components, CF(1) - the catalytic core - and CF(0) - the membrane proton channel. CF(1) has five subunits: alpha(3), beta(3), gamma(1), delta(1), epsilon(1). CF(0) has three main subunits: a, b and c.

Its subcellular location is the cell membrane. In terms of biological role, produces ATP from ADP in the presence of a proton gradient across the membrane. The gamma chain is believed to be important in regulating ATPase activity and the flow of protons through the CF(0) complex. This is ATP synthase gamma chain from Rubrobacter xylanophilus (strain DSM 9941 / JCM 11954 / NBRC 16129 / PRD-1).